The following is a 334-amino-acid chain: F420-dependent glucose-6-phosphate dehydrogenase (334 aa).

Asp38 provides a ligand contact to coenzyme F420-(gamma-Glu)n. Residue His39 is the Proton donor of the active site. Coenzyme F420-(gamma-Glu)n is bound by residues Thr75 and 106-107 (TG). Glu108 (proton acceptor) is an active-site residue. Coenzyme F420-(gamma-Glu)n is bound by residues Asn111, 175-176 (GG), and 178-179 (LV). Substrate is bound by residues Thr193, Lys196, Lys257, and Arg281.

Belongs to the F420-dependent glucose-6-phosphate dehydrogenase family. In terms of assembly, homodimer.

The catalysed reaction is oxidized coenzyme F420-(gamma-L-Glu)(n) + D-glucose 6-phosphate + H(+) = 6-phospho-D-glucono-1,5-lactone + reduced coenzyme F420-(gamma-L-Glu)(n). Functionally, catalyzes the coenzyme F420-dependent oxidation of glucose 6-phosphate (G6P) to 6-phosphogluconolactone. The sequence is that of F420-dependent glucose-6-phosphate dehydrogenase from Kribbella flavida (strain DSM 17836 / JCM 10339 / NBRC 14399).